Consider the following 607-residue polypeptide: Polyphenol oxidase, chloroplastic (607 aa).

The transit peptide at 1–103 (MASLPWSLTT…LGATKPLAFG (103 aa)) directs the protein to the chloroplast. The segment at 39–73 (RNRSRRFAPSKVSCNSANGDPNSDSTSDVRETSSG) is disordered. Positions 50-64 (VSCNSANGDPNSDST) are enriched in polar residues. Intrachain disulfides connect C114/C129 and C128/C191. Positions 190, 211, 220, 342, 346, and 375 each coordinate Cu cation. A cross-link (2'-(S-cysteinyl)-histidine (Cys-His)) is located at residues 194–211 (CQGAYDQVGYTDLELQVH).

The protein belongs to the tyrosinase family. It depends on Cu(2+) as a cofactor.

Its subcellular location is the plastid. It is found in the chloroplast thylakoid lumen. It catalyses the reaction 2 catechol + O2 = 2 1,2-benzoquinone + 2 H2O. Functionally, catalyzes the oxidation of mono- and o-diphenols to o-diquinones. This chain is Polyphenol oxidase, chloroplastic, found in Vitis vinifera (Grape).